Consider the following 55-residue polypeptide: Conotoxin vc5b (55 aa).

The N-terminal stretch at 1–15 (VILLLLIASAPSVDA) is a signal peptide. Residues 16-41 (QPKTKDDVPLAPLHDNAKSALQHLNQ) constitute a propeptide that is removed on maturation. A Glutamine amide modification is found at Gln53.

Contains 2 disulfide bonds that can be either 'C1-C3, C2-C4' or 'C1-C4, C2-C3', since these disulfide connectivities have been observed for conotoxins with cysteine framework V (for examples, see AC P0DQQ7 and AC P81755). Expressed by the venom duct.

It is found in the secreted. This Conus victoriae (Queen Victoria cone) protein is Conotoxin vc5b.